The primary structure comprises 863 residues: Scm-like with four MBT domains protein 1 (863 aa).

MBT repeat units lie at residues 20–120 (FSWE…LEAP), 128–232 (SDWS…LQPP), 242–346 (ADWQ…INPP), and 354–451 (FDWA…LSTP). The tract at residues 638–773 (KKKNKRIGRP…SDGENKPPSP (136 aa)) is disordered. Residues 660-679 (KTSKRRKRRKNIFVHKKKRS) show a composition bias toward basic residues. The span at 680–691 (SASVDNTPVGSP) shows a compositional bias: polar residues. The span at 696–710 (GEDEDDADDGDDDSL) shows a compositional bias: acidic residues. Phosphoserine occurs at positions 764 and 772. The SAM domain occupies 793–861 (WSVADVVRFI…RIKFAFYEQF (69 aa)).

In terms of assembly, interacts with MYOD1. Component of the SLC (SFMBT1-LSD1-CoREST) corepressor complex, which also contains KDM1A/LSD1 and RCOR1/CoREST. Interacts with KDM1A/LSD1 and RCOR1/CoREST. Interacts with MYOD1. Interacts with L3MBTL3. Highly expressed in the testis, low expression was detected in brain, kidney, heart and lung.

It is found in the nucleus. Its function is as follows. Histone-binding protein, which is part of various corepressor complexes. Mediates the recruitment of corepressor complexes to target genes, followed by chromatin compaction and repression of transcription. Plays a role during myogenesis: required for the maintenance of undifferentiated states of myogenic progenitor cells via interaction with MYOD1. Interaction with MYOD1 leads to the recruitment of associated corepressors and silencing of MYOD1 target genes. Part of the SLC complex in germ cells, where it may play a role during spermatogenesis. The protein is Scm-like with four MBT domains protein 1 (Sfmbt1) of Rattus norvegicus (Rat).